Consider the following 147-residue polypeptide: Ubiquitin-conjugating enzyme E2 5A (147 aa).

The span at 1–15 (MASKRIQKELKDLQK) shows a compositional bias: basic and acidic residues. The interval 1–24 (MASKRIQKELKDLQKDPPTSCSAG) is disordered. The UBC core domain occupies 1–147 (MASKRIQKEL…ARTWTQRYAM (147 aa)). The active-site Glycyl thioester intermediate is C85.

The protein belongs to the ubiquitin-conjugating enzyme family.

It carries out the reaction S-ubiquitinyl-[E1 ubiquitin-activating enzyme]-L-cysteine + [E2 ubiquitin-conjugating enzyme]-L-cysteine = [E1 ubiquitin-activating enzyme]-L-cysteine + S-ubiquitinyl-[E2 ubiquitin-conjugating enzyme]-L-cysteine.. It participates in protein modification; protein ubiquitination. Functionally, E2 conjugating enzyme that associates with the E3 ubiquitin-protein ligase EL5 to mediate ubiquitination of target proteins. This chain is Ubiquitin-conjugating enzyme E2 5A (UBC5A), found in Oryza sativa subsp. japonica (Rice).